A 397-amino-acid chain; its full sequence is Xylose isomerase (397 aa).

Catalysis depends on residues H54 and D57. Mg(2+) is bound by residues E181, E217, H220, D245, D255, D257, and D293.

Belongs to the xylose isomerase family. In terms of assembly, homotetramer. The cofactor is Mg(2+).

Its subcellular location is the cytoplasm. The enzyme catalyses alpha-D-xylose = alpha-D-xylulofuranose. The sequence is that of Xylose isomerase from Clavibacter sepedonicus (Clavibacter michiganensis subsp. sepedonicus).